The primary structure comprises 45 residues: Large ribosomal subunit protein bL34 (45 aa).

This sequence belongs to the bacterial ribosomal protein bL34 family.

This is Large ribosomal subunit protein bL34 from Kocuria rhizophila (strain ATCC 9341 / DSM 348 / NBRC 103217 / DC2201).